The sequence spans 424 residues: Cyclin-dependent kinase D-1 (424 aa).

The 281-residue stretch at 19-299 folds into the Protein kinase domain; sequence YLKREVLGEG…AQQALEHRYF (281 aa). ATP is bound by residues 25-33 and Lys48; that span reads LGEGTYGVV. A Phosphothreonine modification is found at Thr29. Tyr30 bears the Phosphotyrosine mark. Asp141 functions as the Proton acceptor in the catalytic mechanism. Position 168 is a phosphoserine (Ser168). Thr174 carries the post-translational modification Phosphothreonine. Disordered stretches follow at residues 303 to 337 and 359 to 424; these read PAPTKPSQLPRPPPKGDSGNNKIPDLNLQDGPVVL and ADRT…GYTE. Positions 359–374 are enriched in basic and acidic residues; the sequence is ADRTEEHPSGARHMDD.

This sequence belongs to the protein kinase superfamily. CMGC Ser/Thr protein kinase family. CDC2/CDKX subfamily.

The protein resides in the nucleus. The catalysed reaction is L-seryl-[protein] + ATP = O-phospho-L-seryl-[protein] + ADP + H(+). The enzyme catalyses L-threonyl-[protein] + ATP = O-phospho-L-threonyl-[protein] + ADP + H(+). It catalyses the reaction [DNA-directed RNA polymerase] + ATP = phospho-[DNA-directed RNA polymerase] + ADP + H(+). This chain is Cyclin-dependent kinase D-1 (CDKD-1), found in Oryza sativa subsp. indica (Rice).